The chain runs to 1241 residues: MIENWPKKPEGSQWTDDQWKAVVANGRDILVAAAAGSGKTAVLVERIIKKIINEENPVDVDRLLVVTFTNAAAQEMKNRIGEALEKVLIDEPGSQHIRKQLSLLNKASISTIHSFCLQVIRGYYYMLDVDPRFRIANQTENELLKEEVLDDILEEEYGIEDNTIFFELVDRYTSDRSDDDLQRMILALHTESRAHPNPEKWLDKLVEAYDVEGKTIEDLVYASYLLEDVKFQLETAEQHIRKATELAMLPDGPAPRVETLQADLALLGTLSSAARESWTSVYEAMQNVSWQTLKRIKKSDYNEDVVKQVDSLRNKAKDEVKKLQEELFSRKPESFLRDFQDMHPVLEKLVQLVKVFTERFQAMKRDKGMVDFTDLEHFCLQILSEQSEEGEMKPSAVALQYRNKFAEVLVDEYQDTNFVQESIIKFVTKDSESEGNLFMVGDVKQSIYRFRLAEPGLFLGKYKRFTQEGLGGGMKIDLAKNFRSRHEVLAGTNFIFKQIMGEEVGEIDYDADAELKLGASYPEGEDVAAELLCIQQTEEEVIDGEEGAEVEKAQLEARLMAQRIKAMVDSGYEVYDRKTDSMRPVQYRDFVILLRSMPWAPQIMEELKLQGIPVYADLATGYFEATEVNIMMNVFRVIDNPMQDIPLAAVLRSPIVGLNDEELATLRAHGKKGSFYEVMSSFLKGAPLEEEKELHDKLEWFYNLLQGWREFARQQSLSDLIWKVYGETGYYDFVGGLPAGKQRQANLRVLYDRARQYEATSFRGLFRFLRFIERILERGDDMGTARALGEQEDVVRIMTIHKSKGLEFPVVFVAGLGRRFNTQDLMKRFLLHKDFGFGSQFIDPRKRIKYTTLSQLAIKRKMKMELIAEEMRVLYVALTRAKEKLILIGTVKDATKEMEKWLDAREHSEWLLPDHIRAGASCYLDWIAPSLYRHRDSEILLELGQGSVPDEIYGYDTSWKVEVVDGNTLLAPEPVQEEKQELLEALREKKAVPLESERKEEVYDRLMWKYGYEEATSHRAKQSVTEIKRNYQSEEGSDNAFIKKLRAPIRTRPRFMEKKGLTYAERGTAVHAVMQHVDLKKPITEEVIREQIAGMVNKELLTFEQAEEIAIEKVISFFDSDLGKRVLAAKSVEREVPFTMMLAAEEAYQDWQGQSGESILVQGVIDCMIEEEDGITLIDFKTDTIEGKFPGGFDQAKPILEERYKVQLSLYAKALEKSLQHPVKEKCLYFFDGNHVIKVEE.

Residues 12-485 form the UvrD-like helicase ATP-binding domain; sequence SQWTDDQWKA…IDLAKNFRSR (474 aa). 33 to 40 is a binding site for ATP; the sequence is AAAGSGKT. Positions 505 to 805 constitute a UvrD-like helicase C-terminal domain; that stretch reads GEIDYDADAE…RIMTIHKSKG (301 aa).

This sequence belongs to the helicase family. AddA subfamily. In terms of assembly, heterodimer of AddA and AddB/RexB. Mg(2+) is required as a cofactor.

The enzyme catalyses Couples ATP hydrolysis with the unwinding of duplex DNA by translocating in the 3'-5' direction.. It carries out the reaction ATP + H2O = ADP + phosphate + H(+). In terms of biological role, the heterodimer acts as both an ATP-dependent DNA helicase and an ATP-dependent, dual-direction single-stranded exonuclease. Recognizes the chi site generating a DNA molecule suitable for the initiation of homologous recombination. The AddA nuclease domain is required for chi fragment generation; this subunit has the helicase and 3' -&gt; 5' nuclease activities. This chain is ATP-dependent helicase/nuclease subunit A, found in Bacillus cereus (strain AH187).